The following is a 39-amino-acid chain: Photosystem II reaction center protein J (39 aa).

The helical transmembrane segment at 9-29 (LWLVGLVGGLAVITMLGLFIY) threads the bilayer.

This sequence belongs to the PsbJ family. As to quaternary structure, PSII is composed of 1 copy each of membrane proteins PsbA, PsbB, PsbC, PsbD, PsbE, PsbF, PsbH, PsbI, PsbJ, PsbK, PsbL, PsbM, PsbT, PsbX, PsbY, PsbZ, Psb30/Ycf12, at least 3 peripheral proteins of the oxygen-evolving complex and a large number of cofactors. It forms dimeric complexes.

It localises to the plastid. Its subcellular location is the chloroplast thylakoid membrane. One of the components of the core complex of photosystem II (PSII). PSII is a light-driven water:plastoquinone oxidoreductase that uses light energy to abstract electrons from H(2)O, generating O(2) and a proton gradient subsequently used for ATP formation. It consists of a core antenna complex that captures photons, and an electron transfer chain that converts photonic excitation into a charge separation. In Phaeodactylum tricornutum (strain CCAP 1055/1), this protein is Photosystem II reaction center protein J.